The following is a 317-amino-acid chain: MGERFHARTVRVKAPGKVNVSLSVGPLRPDGYHSVASVYLAVSLYEEVAATSTEAPGITVSISPDSTLDLDGVDIPLDQRNLAYKAAAIMAEMSEKPTGVHLEITKRVPVAGGMGGGSADAAATLLACDALWNSGLSREELAHLAAELGADVPFSLLGGTAVGLGVGDKLSPALAKAQMDWVLVFADYGLSTPDVFRTLDGLRDSEGVEIPEPVDVDPTILQALRKGDPETLSRVLINDLQRASITLAPQLRDTIGLGEARGALAGMVSGSGPTIALLARDSVSASVLAEELTHRGHNALAVHGPVPGARIISDTLL.

The active site involves Lys17. 109–119 (PVAGGMGGGSA) contacts ATP. Asp151 is a catalytic residue.

The protein belongs to the GHMP kinase family. IspE subfamily.

The catalysed reaction is 4-CDP-2-C-methyl-D-erythritol + ATP = 4-CDP-2-C-methyl-D-erythritol 2-phosphate + ADP + H(+). Its pathway is isoprenoid biosynthesis; isopentenyl diphosphate biosynthesis via DXP pathway; isopentenyl diphosphate from 1-deoxy-D-xylulose 5-phosphate: step 3/6. Functionally, catalyzes the phosphorylation of the position 2 hydroxy group of 4-diphosphocytidyl-2C-methyl-D-erythritol. This chain is 4-diphosphocytidyl-2-C-methyl-D-erythritol kinase, found in Paenarthrobacter aurescens (strain TC1).